A 498-amino-acid chain; its full sequence is ATP synthase subunit beta, chloroplastic (498 aa).

ATP is bound at residue 172–179 (GGAGVGKT).

The protein belongs to the ATPase alpha/beta chains family. F-type ATPases have 2 components, CF(1) - the catalytic core - and CF(0) - the membrane proton channel. CF(1) has five subunits: alpha(3), beta(3), gamma(1), delta(1), epsilon(1). CF(0) has four main subunits: a(1), b(1), b'(1) and c(9-12).

It localises to the plastid. The protein resides in the chloroplast thylakoid membrane. It catalyses the reaction ATP + H2O + 4 H(+)(in) = ADP + phosphate + 5 H(+)(out). Its function is as follows. Produces ATP from ADP in the presence of a proton gradient across the membrane. The catalytic sites are hosted primarily by the beta subunits. The polypeptide is ATP synthase subunit beta, chloroplastic (Nicotiana tabacum (Common tobacco)).